A 358-amino-acid polypeptide reads, in one-letter code: ATP-dependent (S)-NAD(P)H-hydrate dehydratase (358 aa).

In terms of domain architecture, YjeF C-terminal spans 63 to 354 (LLQSAKNVIP…QQIHQAFEEL (292 aa)). (6S)-NADPHX-binding positions include Gly-163 and 220–226 (NVVEFDR). ATP-binding positions include 261–265 (KGQHD) and 280–289 (GSNRRCGGQG). Position 290 (Asp-290) interacts with (6S)-NADPHX.

The protein belongs to the NnrD/CARKD family. Requires Mg(2+) as cofactor.

The catalysed reaction is (6S)-NADHX + ATP = ADP + phosphate + NADH + H(+). It carries out the reaction (6S)-NADPHX + ATP = ADP + phosphate + NADPH + H(+). Catalyzes the dehydration of the S-form of NAD(P)HX at the expense of ATP, which is converted to ADP. Together with NAD(P)HX epimerase, which catalyzes the epimerization of the S- and R-forms, the enzyme allows the repair of both epimers of NAD(P)HX, a damaged form of NAD(P)H that is a result of enzymatic or heat-dependent hydration. The polypeptide is ATP-dependent (S)-NAD(P)H-hydrate dehydratase (Nematostella vectensis (Starlet sea anemone)).